A 450-amino-acid polypeptide reads, in one-letter code: Sulfide:quinone oxidoreductase, mitochondrial (450 aa).

FAD contacts are provided by residues 53 to 54, E75, Q83, and V118; that span reads SG. K173 carries the post-translational modification N6-acetyllysine. C201 functions as the Cysteine persulfide intermediate in the catalytic mechanism. C201 and C379 are disulfide-bonded. D336 serves as a coordination point for FAD. S343 bears the Phosphoserine mark. An FAD-binding site is contributed by 344–347; it reads KTAA. The active-site Cysteine persulfide intermediate is C379.

The protein belongs to the SQRD family. The cofactor is FAD.

The protein localises to the mitochondrion. The catalysed reaction is ubiquinone-10 + hydrogen sulfide + sulfite + 2 H(+) = ubiquinol-10 + thiosulfate. The enzyme catalyses a quinone + hydrogen sulfide + glutathione + H(+) = S-sulfanylglutathione + a quinol. It catalyses the reaction ubiquinone-10 + hydrogen sulfide + glutathione + H(+) = S-sulfanylglutathione + ubiquinol-10. Its function is as follows. Catalyzes the oxidation of hydrogen sulfide with the help of a quinone, such as ubiquinone-10, giving rise to thiosulfate and ultimately to sulfane (molecular sulfur) atoms. Requires an additional electron acceptor; can use sulfite, sulfide or cyanide (in vitro). It is believed the in vivo electron acceptor is glutathione. The polypeptide is Sulfide:quinone oxidoreductase, mitochondrial (Homo sapiens (Human)).